The primary structure comprises 496 residues: Probable CtpA-like serine protease (496 aa).

Over residues 1–16 the composition is skewed to basic and acidic residues; it reads MDDKQHTTSSDDERAE. Positions 1-27 are disordered; sequence MDDKQHTTSSDDERAENATSNQDQQTN. Residues 17–27 are compositionally biased toward polar residues; sequence NATSNQDQQTN. The helical transmembrane segment at 39 to 59 threads the bilayer; it reads FISILIGTIIITAVITVVAYI. Residues 124-206 form the PDZ domain; sequence TKSFNEGVSG…TEVTLTVQRG (83 aa). Catalysis depends on charge relay system residues S329, D340, and K354.

The protein belongs to the peptidase S41A family.

The protein localises to the cell membrane. This is Probable CtpA-like serine protease from Staphylococcus aureus (strain MRSA252).